Here is a 428-residue protein sequence, read N- to C-terminus: Putative FBD-associated F-box protein At5g56390 (428 aa).

In terms of domain architecture, F-box spans 2–50; sequence DKISQLHDELLLGILSLLPNAKDVVATMVLSKRWRYLWMMVPSLVYDDS. The 51-residue stretch at 344-394 folds into the FBD domain; it reads CWNETSLVPEYLLPSLETFEWVDYEGTKTEKQVVAFILRIASCLKQATIVS.

In Arabidopsis thaliana (Mouse-ear cress), this protein is Putative FBD-associated F-box protein At5g56390.